The following is a 331-amino-acid chain: ADP-L-glycero-D-manno-heptose-6-epimerase (331 aa).

NADP(+) is bound by residues F11–I12, D32–N33, K39, K54, E75–S79, and N92. The active-site Proton acceptor is Y139. K143 is a binding site for NADP(+). N168 provides a ligand contact to substrate. Positions 169 and 177 each coordinate NADP(+). K177 serves as the catalytic Proton acceptor. Substrate-binding positions include R179, H186, F200–Y203, R213, and Y292.

This sequence belongs to the NAD(P)-dependent epimerase/dehydratase family. HldD subfamily. In terms of assembly, homopentamer. Requires NADP(+) as cofactor.

The catalysed reaction is ADP-D-glycero-beta-D-manno-heptose = ADP-L-glycero-beta-D-manno-heptose. It functions in the pathway nucleotide-sugar biosynthesis; ADP-L-glycero-beta-D-manno-heptose biosynthesis; ADP-L-glycero-beta-D-manno-heptose from D-glycero-beta-D-manno-heptose 7-phosphate: step 4/4. Catalyzes the interconversion between ADP-D-glycero-beta-D-manno-heptose and ADP-L-glycero-beta-D-manno-heptose via an epimerization at carbon 6 of the heptose. This is ADP-L-glycero-D-manno-heptose-6-epimerase from Cupriavidus taiwanensis (strain DSM 17343 / BCRC 17206 / CCUG 44338 / CIP 107171 / LMG 19424 / R1) (Ralstonia taiwanensis (strain LMG 19424)).